Consider the following 228-residue polypeptide: Octanoyltransferase (228 aa).

The BPL/LPL catalytic domain occupies 40–225; that stretch reads GEEAERVWLV…SFERVFDAAP (186 aa). Substrate-binding positions include 79–86, 156–158, and 169–171; these read RGGQWTYH, AIG, and GIA. Cysteine 187 (acyl-thioester intermediate) is an active-site residue.

This sequence belongs to the LipB family.

It is found in the cytoplasm. It carries out the reaction octanoyl-[ACP] + L-lysyl-[protein] = N(6)-octanoyl-L-lysyl-[protein] + holo-[ACP] + H(+). It participates in protein modification; protein lipoylation via endogenous pathway; protein N(6)-(lipoyl)lysine from octanoyl-[acyl-carrier-protein]: step 1/2. Functionally, catalyzes the transfer of endogenously produced octanoic acid from octanoyl-acyl-carrier-protein onto the lipoyl domains of lipoate-dependent enzymes. Lipoyl-ACP can also act as a substrate although octanoyl-ACP is likely to be the physiological substrate. This Acidiphilium cryptum (strain JF-5) protein is Octanoyltransferase.